The sequence spans 1108 residues: Unconventional myosin-Ie (1108 aa).

Residues 19–692 (SGVDDMVLLS…SLFLLEEMRE (674 aa)) enclose the Myosin motor domain. 112-119 (GESGAGKT) contributes to the ATP binding site. The actin-binding stretch occupies residues 581 to 591 (PHYIRCIKPNE). In terms of domain architecture, IQ spans 695 to 724 (YDGYARVIQKSWRKFVARKKYVQMREEASD). One can recognise a TH1 domain in the interval 730–922 (KERRRNSINR…NKVLQVSIGP (193 aa)). The tract at residues 919–966 (SIGPGLPKNSRPTRRNTTQNTGYSSGTQNANYPVRAAPPPPGYHQNGV) is disordered. A compositionally biased stretch (polar residues) spans 933-949 (RNTTQNTGYSSGTQNAN). S980 and S1002 each carry phosphoserine. Residues 993–1053 (ARPPLPRQQS…KPQPKPKPQV (61 aa)) form a disordered region. A compositionally biased stretch (polar residues) spans 999 to 1013 (RQQSTSSDRVSQTPE). The segment covering 1035–1052 (RPPPAGGRPKPQPKPKPQ) has biased composition (pro residues). Positions 1051-1108 (PQVPQCKALYAYDAQDTDELSFNANDIIDIIKEDPSGWWTGRLRGKQGLFPNNYVTKI) constitute an SH3 domain.

This sequence belongs to the TRAFAC class myosin-kinesin ATPase superfamily. Myosin family. As to quaternary structure, interacts with CALM and F-actin. Interacts (via SH3 domain) with SYNJ1, DNM1 and DNM2. Interacts with ARL14EP. Interacts with CARMIL1. As to expression, expressed in the immune system. In the kidney, predominantly expressed in the glomerulus, including podocytes.

The protein resides in the cytoplasm. The protein localises to the cytoskeleton. Its subcellular location is the cytoplasmic vesicle. It is found in the clathrin-coated vesicle. It localises to the cell junction. Actin-based motor molecule with ATPase activity. Unconventional myosins serve in intracellular movements. Their highly divergent tails bind to membranous compartments, which are then moved relative to actin filaments. Binds to membranes containing anionic phospholipids via its tail domain. Involved in clathrin-mediated endocytosis and intracellular movement of clathrin-coated vesicles. Required for normal morphology of the glomerular basement membrane, normal development of foot processes by kidney podocytes and normal kidney function. In dendritic cells, may control the movement of class II-containing cytoplasmic vesicles along the actin cytoskeleton by connecting them with the actin network via ARL14EP and ARL14. The sequence is that of Unconventional myosin-Ie (MYO1E) from Homo sapiens (Human).